The primary structure comprises 199 residues: Riboflavin synthase (199 aa).

Lumazine-binding repeat units follow at residues 1-95 (MFSG…IGGH) and 96-188 (FVSG…VDTI). 2,4-dihydroxypteridine is bound by residues 4-6 (GII), 46-48 (CLT), 60-65 (DVTEET), 99-101 (GHV), Lys130, 139-141 (SLT), and 153-158 (SLIPET).

Homotrimer.

The enzyme catalyses 2 6,7-dimethyl-8-(1-D-ribityl)lumazine + H(+) = 5-amino-6-(D-ribitylamino)uracil + riboflavin. It functions in the pathway cofactor biosynthesis; riboflavin biosynthesis; riboflavin from 2-hydroxy-3-oxobutyl phosphate and 5-amino-6-(D-ribitylamino)uracil: step 2/2. Its function is as follows. Catalyzes the dismutation of two molecules of 6,7-dimethyl-8-ribityllumazine, resulting in the formation of riboflavin and 5-amino-6-(D-ribitylamino)uracil. This Chlamydia trachomatis serovar D (strain ATCC VR-885 / DSM 19411 / UW-3/Cx) protein is Riboflavin synthase (ribE).